The chain runs to 931 residues: Beta-mannosidase A (931 aa).

The first 21 residues, 1–21 (MRHSIGLAAALLAPTLPVALG), serve as a signal peptide directing secretion. 5 N-linked (GlcNAc...) asparagine glycosylation sites follow: N40, N79, N247, N282, and N347. The Proton donor role is filled by E479. 8 N-linked (GlcNAc...) asparagine glycosylation sites follow: N550, N608, N658, N738, N790, N798, N830, and N918.

It belongs to the glycosyl hydrolase 2 family. Beta-mannosidase A subfamily. In terms of assembly, homodimer. N-glycosylated.

Its subcellular location is the secreted. The catalysed reaction is Hydrolysis of terminal, non-reducing beta-D-mannose residues in beta-D-mannosides.. It participates in glycan metabolism; N-glycan degradation. Functionally, exoglycosidase that cleaves the single beta-linked mannose residue from the non-reducing end of beta-mannosidic oligosaccharides of various complexity and length. Involved in the degradation of polymeric mannan and galactomannan. Releases the terminal mannose residue from mannobiose and mannotriose, as well as from galactosyl-mannobiose (GM2), galactosyl-mannotriose (GM3) and di-galactosyl-mannopentaose (G2M5). The sequence is that of Beta-mannosidase A (mndA) from Aspergillus niger.